The following is a 253-amino-acid chain: Fatty acid elongase 5 (253 aa).

The next 7 membrane-spanning stretches (helical) occupy residues 24–44 (IFVS…LVII), 60–80 (IMMI…ISLA), 100–120 (FWIF…VLMI), 127–147 (QLSF…GLLL), 150–170 (GIGN…HFLM), 188–208 (ILTK…SLAP), and 214–234 (FALQ…ILFL). Residues 132–136 (HIYHH) carry the HxxHH motif motif. Catalysis depends on H135, which acts as the Nucleophile.

This sequence belongs to the ELO family.

It is found in the membrane. The catalysed reaction is an acyl-CoA + malonyl-CoA + H(+) = a 3-oxoacyl-CoA + CO2 + CoA. The protein operates within lipid metabolism; polyunsaturated fatty acid biosynthesis. In terms of biological role, involved in the synthesis of fatty acids. Elongates C20 polyunsaturated fatty acids (PUFAs) with a preference for n-6 PUFAs. The protein is Fatty acid elongase 5 of Trypanosoma cruzi (strain CL Brener).